Reading from the N-terminus, the 104-residue chain is Large ribosomal subunit protein uL23 (104 aa).

The protein belongs to the universal ribosomal protein uL23 family. In terms of assembly, part of the 50S ribosomal subunit. Contacts protein L29, and trigger factor when it is bound to the ribosome.

In terms of biological role, one of the early assembly proteins it binds 23S rRNA. One of the proteins that surrounds the polypeptide exit tunnel on the outside of the ribosome. Forms the main docking site for trigger factor binding to the ribosome. The protein is Large ribosomal subunit protein uL23 of Polynucleobacter necessarius subsp. necessarius (strain STIR1).